The primary structure comprises 129 residues: KIFSKCELARKLKSMGMDGFHGYSLANWVCMAEYESNFNTQAFNGRNSNGSSDYGIFQLNSKWWCKSNSHSSANACNIMCSKFLDDNIDDDIACAKRVVKDPNGMSAWVAWVKHCKGKDLSKYLASCNL.

Residues 1 to 129 form the C-type lysozyme domain; sequence KIFSKCELAR…LSKYLASCNL (129 aa). 4 disulfide bridges follow: Cys-6/Cys-127, Cys-30/Cys-115, Cys-65/Cys-80, and Cys-76/Cys-94. Residues Glu-35 and Asp-53 contribute to the active site. 5 residues coordinate Ca(2+): Lys-82, Asp-85, Asn-87, Asp-90, and Asp-91.

It belongs to the glycosyl hydrolase 22 family. In terms of assembly, monomer. Requires Ca(2+) as cofactor.

It catalyses the reaction Hydrolysis of (1-&gt;4)-beta-linkages between N-acetylmuramic acid and N-acetyl-D-glucosamine residues in a peptidoglycan and between N-acetyl-D-glucosamine residues in chitodextrins.. In terms of biological role, lysozymes have primarily a bacteriolytic function; those in tissues and body fluids are associated with the monocyte-macrophage system and enhance the activity of immunoagents. In Canis lupus familiaris (Dog), this protein is Lysozyme C, milk isozyme.